The primary structure comprises 110 residues: Small ribosomal subunit protein uS17 (110 aa).

This sequence belongs to the universal ribosomal protein uS17 family. In terms of assembly, part of the 30S ribosomal subunit.

In terms of biological role, one of the primary rRNA binding proteins, it binds specifically to the 5'-end of 16S ribosomal RNA. This is Small ribosomal subunit protein uS17 from Haloquadratum walsbyi (strain DSM 16790 / HBSQ001).